The sequence spans 618 residues: Elongation factor 4 (618 aa).

In terms of domain architecture, tr-type G spans alanine 17 to glutamate 198. GTP is bound by residues aspartate 29–threonine 34 and asparagine 145–aspartate 148.

The protein belongs to the TRAFAC class translation factor GTPase superfamily. Classic translation factor GTPase family. LepA subfamily.

Its subcellular location is the cell membrane. It carries out the reaction GTP + H2O = GDP + phosphate + H(+). Its function is as follows. Required for accurate and efficient protein synthesis under certain stress conditions. May act as a fidelity factor of the translation reaction, by catalyzing a one-codon backward translocation of tRNAs on improperly translocated ribosomes. Back-translocation proceeds from a post-translocation (POST) complex to a pre-translocation (PRE) complex, thus giving elongation factor G a second chance to translocate the tRNAs correctly. Binds to ribosomes in a GTP-dependent manner. This Pseudarthrobacter chlorophenolicus (strain ATCC 700700 / DSM 12829 / CIP 107037 / JCM 12360 / KCTC 9906 / NCIMB 13794 / A6) (Arthrobacter chlorophenolicus) protein is Elongation factor 4.